The following is a 354-amino-acid chain: Putative Xaa-Pro aminopeptidase (354 aa).

Mn(2+) contacts are provided by aspartate 213, aspartate 224, histidine 290, glutamate 319, and glutamate 333.

This sequence belongs to the peptidase M24B family. Requires Mn(2+) as cofactor.

The catalysed reaction is Release of any N-terminal amino acid, including proline, that is linked to proline, even from a dipeptide or tripeptide.. The chain is Putative Xaa-Pro aminopeptidase (pepP) from Mycoplasma genitalium (strain ATCC 33530 / DSM 19775 / NCTC 10195 / G37) (Mycoplasmoides genitalium).